Reading from the N-terminus, the 395-residue chain is NAD(P)H-quinone oxidoreductase subunit H, chloroplastic (395 aa).

Belongs to the complex I 49 kDa subunit family. As to quaternary structure, NDH is composed of at least 16 different subunits, 5 of which are encoded in the nucleus.

It localises to the plastid. It is found in the chloroplast thylakoid membrane. The catalysed reaction is a plastoquinone + NADH + (n+1) H(+)(in) = a plastoquinol + NAD(+) + n H(+)(out). It carries out the reaction a plastoquinone + NADPH + (n+1) H(+)(in) = a plastoquinol + NADP(+) + n H(+)(out). Functionally, NDH shuttles electrons from NAD(P)H:plastoquinone, via FMN and iron-sulfur (Fe-S) centers, to quinones in the photosynthetic chain and possibly in a chloroplast respiratory chain. The immediate electron acceptor for the enzyme in this species is believed to be plastoquinone. Couples the redox reaction to proton translocation, and thus conserves the redox energy in a proton gradient. This is NAD(P)H-quinone oxidoreductase subunit H, chloroplastic from Dioscorea elephantipes (Elephant's foot yam).